Consider the following 107-residue polypeptide: Small integral membrane protein 19 (107 aa).

Residues 25–43 (ATNVYLIVILVSFGLFMYA) traverse the membrane as a helical segment.

This sequence belongs to the SMIM19 family.

The protein resides in the membrane. This chain is Small integral membrane protein 19 (SMIM19), found in Homo sapiens (Human).